The following is an 885-amino-acid chain: Exosome complex component 10 (885 aa).

Residues 1–10 (MAPPSPREHQ) show a composition bias toward basic and acidic residues. Disordered regions lie at residues 1–23 (MAPP…PDAE) and 210–232 (KPLP…EDLD). A Glycyl lysine isopeptide (Lys-Gly) (interchain with G-Cter in SUMO2) cross-link involves residue Lys-19. Residues 217-230 (SKERRERPQDRPED) are compositionally biased toward basic and acidic residues. In terms of domain architecture, 3'-5' exonuclease spans 289–455 (HVVSSLDELV…YIYDRMRLEL (167 aa)). Residues Asp-313, Glu-315, Asp-371, and Asp-440 each coordinate Mg(2+). The region spanning 503 to 583 (NSQQLTAFQL…QQAREMPLLK (81 aa)) is the HRDC domain. Lys-583 participates in a covalent cross-link: Glycyl lysine isopeptide (Lys-Gly) (interchain with G-Cter in SUMO1); alternate. Lys-583 participates in a covalent cross-link: Glycyl lysine isopeptide (Lys-Gly) (interchain with G-Cter in SUMO2); alternate. Lys-710 participates in a covalent cross-link: Glycyl lysine isopeptide (Lys-Gly) (interchain with G-Cter in SUMO2). The segment at 730-885 (VQKEPKEAAK…RGFRHNWPKR (156 aa)) is disordered. 2 stretches are compositionally biased toward basic and acidic residues: residues 732–756 (KEPK…KEES) and 776–794 (ATKK…EQKQ). Ser-821 is subject to Phosphoserine. Glycyl lysine isopeptide (Lys-Gly) (interchain with G-Cter in SUMO2) cross-links involve residues Lys-833, Lys-859, and Lys-873.

This sequence belongs to the exosome component 10/RRP6 family. As to quaternary structure, component of the RNA exosome complex. The catalytically inactive RNA exosome core complex (Exo-9) associates with the catalytic subunit EXOSC10/RRP6 (via its N-terminus). Exo-9 may associate with DIS3 to form the nucleolar exosome complex, or DIS3L to form the cytoplasmic exosome complex. The RNA exosome complex interacts with cofactors C1D/RRP47, MPHOSPH6/MPP6 and MTREX/MTR4. Interacts with MTREX; the interaction with MTREX mediates the association of MTREX with nuclear RNA exosomes. Part of the small subunit (SSU) processome, composed of more than 70 proteins and the RNA chaperone small nucleolar RNA (snoRNA) U3. Interacts with ALYREF/THOC4. Interacts with DHX36; this interaction occurs in a RNase-insensitive manner. Interacts with NRDE2. Interacts (via C-terminus) with USP36 (via C-terminus); the interaction is facilitated by the association with RNA and promotes sumoylation of EXOSC10. The cofactor is Mg(2+). Sumoylated by USP36; sumoylation does not significantly affect EXOSC10 nucleolar localization and association with core exosome and USP36, but regulates the nucleolar RNA exosome activity in rRNA processing by promoting binding of EXOSC10 to pre-rRNAs. Effects of sumoylation on EXOSC10 levels vary between different studies. Sumoylation of EXOSC10 is required for the modulation of EXOSC10 effects on cellular protein translation and cell proliferation. Sumoylation is promoted by mild hypothermia. In terms of tissue distribution, expressed in testis (at protein level).

The protein localises to the cytoplasm. It is found in the nucleus. The protein resides in the nucleolus. It localises to the nucleoplasm. Catalytic component of the RNA exosome complex which has 3'-&gt;5' exoribonuclease activity and participates in a multitude of cellular RNA processing and degradation events. In the nucleus, the RNA exosome complex is involved in proper maturation of stable RNA species such as rRNA, snRNA and snoRNA, in the elimination of RNA processing by-products and non-coding 'pervasive' transcripts, such as antisense RNA species and promoter-upstream transcripts (PROMPTs), and of mRNAs with processing defects, thereby limiting or excluding their export to the cytoplasm. Part of the small subunit (SSU) processome, first precursor of the small eukaryotic ribosomal subunit. During the assembly of the SSU processome in the nucleolus, many ribosome biogenesis factors, an RNA chaperone and ribosomal proteins associate with the nascent pre-rRNA and work in concert to generate RNA folding, modifications, rearrangements and cleavage as well as targeted degradation of pre-ribosomal RNA by the RNA exosome. The RNA exosome may be involved in Ig class switch recombination (CSR) and/or Ig variable region somatic hypermutation (SHM) by targeting AICDA deamination activity to transcribed dsDNA substrates. In the cytoplasm, the RNA exosome complex is involved in general mRNA turnover and specifically degrades inherently unstable mRNAs containing AU-rich elements (AREs) within their 3' untranslated regions, and in RNA surveillance pathways, preventing translation of aberrant mRNAs. It seems to be involved in degradation of histone mRNA. EXOSC10 is required for nucleolar localization of C1D and probably mediates the association of MTREX, C1D and MPHOSPH6 with the RNA exosome involved in the maturation of 5.8S rRNA. Plays a role in the recruitment of replication protein A complex (RPA) and RAD51 to DNA double-strand breaks caused by irradiation, contributing to DNA repair by homologous recombination. Regulates levels of damage-induced RNAs in order to prevent DNA-RNA hybrid formation at DNA double-strand breaks and limit DNA end resection after damage. Plays a role in oocyte development, maturation and survival. Required for normal testis development and mitotic division of spermatogonia. Plays a role in proper embryo development. Required for global protein translation. Required for cell proliferation. The protein is Exosome complex component 10 of Rattus norvegicus (Rat).